The sequence spans 338 residues: MKRMIALDGAQGEGGGQILRSALSLSMITGQPFTITDIRAGRAKPGLLRQHLTAVKAATEICRATVEGAELRAQRLIFRPGTVRGGDYRFAIGSAGSSTLVLQTVLPALWFADGPSRVEVSGGTDNPSAPPADFIRRVLEPLLAKMGIHQQTTLLRHGFYPAGGGVVATEVSPVALFNTLQLGERGNIVQMRGEVLLAGVPRHVAEREIATLAGSFSLHEQNIHNLPRDQGPGNTVSLEVESENITERFFVVGEKRISAEVVAAQLVKEVKRYLASPAAVGEYLADQLVLPMALAGAGEFTVAHPSCHLLTNIAVVERFLPVRFSLVEADGVTRVSIE.

ATP contacts are provided by residues Q103 and 283–287 (YLADQ). The active-site Tele-AMP-histidine intermediate is H308.

The protein belongs to the RNA 3'-terminal cyclase family. Type 1 subfamily.

It is found in the cytoplasm. It carries out the reaction a 3'-end 3'-phospho-ribonucleotide-RNA + ATP = a 3'-end 2',3'-cyclophospho-ribonucleotide-RNA + AMP + diphosphate. Functionally, catalyzes the conversion of 3'-phosphate to a 2',3'-cyclic phosphodiester at the end of RNA. The mechanism of action of the enzyme occurs in 3 steps: (A) adenylation of the enzyme by ATP; (B) transfer of adenylate to an RNA-N3'P to produce RNA-N3'PP5'A; (C) and attack of the adjacent 2'-hydroxyl on the 3'-phosphorus in the diester linkage to produce the cyclic end product. The biological role of this enzyme is unknown but it is likely to function in some aspects of cellular RNA processing. The sequence is that of RNA 3'-terminal phosphate cyclase from Escherichia coli O17:K52:H18 (strain UMN026 / ExPEC).